A 119-amino-acid polypeptide reads, in one-letter code: Large ribosomal subunit protein uL18 (119 aa).

Belongs to the universal ribosomal protein uL18 family. As to quaternary structure, part of the 50S ribosomal subunit; part of the 5S rRNA/L5/L18/L25 subcomplex. Contacts the 5S and 23S rRNAs.

Functionally, this is one of the proteins that bind and probably mediate the attachment of the 5S RNA into the large ribosomal subunit, where it forms part of the central protuberance. This is Large ribosomal subunit protein uL18 from Tropheryma whipplei (strain TW08/27) (Whipple's bacillus).